The following is an 828-amino-acid chain: Periplasmic nitrate reductase 1 (828 aa).

A signal peptide (tat-type signal) is located at residues 1 to 30 (MKMTRRAFVKANAAASAAAVAGITLPASAA). Residues 41 to 97 (IKWDKAPCRFCGTGCSVLVGTQNGRVVATQGDPEAPVNKGLNCIKGYFLSKIMYGKD) enclose the 4Fe-4S Mo/W bis-MGD-type domain. Positions 48, 51, 55, and 83 each coordinate [4Fe-4S] cluster. Mo-bis(molybdopterin guanine dinucleotide) contacts are provided by residues Lys-85, Gln-152, Asn-177, Cys-181, 214-221 (WGSNMAEM), 245-249 (STYYH), 264-266 (QTD), Met-374, Gln-378, Asn-484, 510-511 (SD), Lys-533, Asp-560, and 718-727 (TGRVLEHWHT). Phe-794 is a substrate binding site. Mo-bis(molybdopterin guanine dinucleotide)-binding residues include Asn-802 and Lys-819.

This sequence belongs to the prokaryotic molybdopterin-containing oxidoreductase family. NasA/NapA/NarB subfamily. As to quaternary structure, component of the periplasmic nitrate reductase NapAB complex composed of NapA and NapB. [4Fe-4S] cluster is required as a cofactor. Mo-bis(molybdopterin guanine dinucleotide) serves as cofactor. In terms of processing, predicted to be exported by the Tat system. The position of the signal peptide cleavage has not been experimentally proven.

It localises to the periplasm. The enzyme catalyses 2 Fe(II)-[cytochrome] + nitrate + 2 H(+) = 2 Fe(III)-[cytochrome] + nitrite + H2O. Its function is as follows. Catalytic subunit of the periplasmic nitrate reductase complex NapAB. Receives electrons from NapB and catalyzes the reduction of nitrate to nitrite. The sequence is that of Periplasmic nitrate reductase 1 from Photobacterium profundum (strain SS9).